The primary structure comprises 267 residues: N-acetylgalactosamine permease IIC component 1 (267 aa).

The Periplasmic segment spans residues 1–10; that stretch reads MHEITLLQGL. The region spanning 1-237 is the PTS EIIC type-4 domain; it reads MHEITLLQGL…VAVLGAGFAV (237 aa). Residues 11 to 31 form a helical membrane-spanning segment; it reads SLAALVFVLGIDFWLEALFLF. Over 32-33 the chain is Cytoplasmic; that stretch reads RP. The helical transmembrane segment at 34–54 threads the bilayer; sequence IIVCTLTGAILGDIQTGLITG. Residues 55–66 lie on the Periplasmic side of the membrane; that stretch reads GLTELAFAGLTP. The chain crosses the membrane as a helical span at residues 67 to 87; sequence AGGVQPPNPIMAGLMTTVIAW. Over 88–94 the chain is Cytoplasmic; the sequence is STGVDAK. A helical membrane pass occupies residues 95 to 115; the sequence is TAIGLGLPFSLLMQYVILFFY. At 116-141 the chain is on the periplasmic side; it reads SAFSLFMTKADKCAKEADTAAFSRLN. Residues 142 to 162 traverse the membrane as a helical segment; sequence WTTMLIVASAYAVIAFLCTYL. The Cytoplasmic portion of the chain corresponds to 163-177; sequence AQGAMQALVKAMPAW. Residues 178–198 traverse the membrane as a helical segment; sequence LTHGFEVAGGILPAVGFGLLL. Residues 199–209 lie on the Periplasmic side of the membrane; it reads RVMFKAQYIPY. A helical membrane pass occupies residues 210–230; sequence LIAGFLFVCYIQVSNLLPVAV. The Cytoplasmic portion of the chain corresponds to 231 to 267; the sequence is LGAGFAVYEFFNAKSRQQAQPQPVASKNEEEDYSNGI.

It localises to the cell inner membrane. In terms of biological role, the phosphoenolpyruvate-dependent sugar phosphotransferase system (PTS), a major carbohydrate active -transport system, catalyzes the phosphorylation of incoming sugar substrates concomitant with their translocation across the cell membrane. This system is involved in N-acetylgalactosamine transport. The polypeptide is N-acetylgalactosamine permease IIC component 1 (agaC) (Escherichia coli (strain K12)).